We begin with the raw amino-acid sequence, 408 residues long: MADKSVKKVVLAYSGGLDTSIILKWLQTEYGAEVITFTADLGQGEEIEPARAKALAAGVKPENIFIEDVREEFVRDYVFPMFRANTVYEGQYLLGTSIARPLIAKKQIEIARKMGADAVSHGATGKGNDQVRFELGYYGLEPDITVIAPWREWDFKSREALLDFAEKHQIQITKDKRGEAPFSVDANLLHSSSEGKVLEDPAVEAPEFVHMRTIAPEDAPDAPTIITIDFEKGDPVAIDGVAMSPATLLTKLNELGRDNGVGRLDLVENRFVGMKSRGVYETPGGTILLAAHRGIESITLDRGAMHLKDELMPKYASLVYNGFWFSPEREMLQAAIDYSQDKVTGRVRVKLYKGNVTVIGRESPYSLYDQDLVTFEEGKVAYDHRDAGGFIKLNALRLRVLAKRDKRG.

Residues 12-20 (AYSGGLDTS) and Ala-39 contribute to the ATP site. The L-citrulline site is built by Tyr-92 and Ser-97. Gly-122 serves as a coordination point for ATP. Residues Thr-124, Asn-128, and Asp-129 each contribute to the L-aspartate site. Asn-128 contributes to the L-citrulline binding site. Residues Arg-132, Ser-183, Ser-192, Glu-268, and Tyr-280 each coordinate L-citrulline.

The protein belongs to the argininosuccinate synthase family. Type 1 subfamily. In terms of assembly, homotetramer.

It is found in the cytoplasm. The catalysed reaction is L-citrulline + L-aspartate + ATP = 2-(N(omega)-L-arginino)succinate + AMP + diphosphate + H(+). Its pathway is amino-acid biosynthesis; L-arginine biosynthesis; L-arginine from L-ornithine and carbamoyl phosphate: step 2/3. The polypeptide is Argininosuccinate synthase (Caulobacter vibrioides (strain ATCC 19089 / CIP 103742 / CB 15) (Caulobacter crescentus)).